The primary structure comprises 295 residues: Tyrosine transport system permease protein (295 aa).

8 consecutive transmembrane segments (helical) span residues 3-23 (GIISVMTQSLILSIMALGVYI), 57-77 (VVATLMAILCGCTAGLVTGIL), 81-101 (FKISNLLSGILVMGMLYSINL), 122-142 (ISPIVLALAFVFICKILLDLF), 173-193 (ILGLMISNGLIALSGSLMAQF), 200-220 (NMGIGTLVLGIASIIIGITLF), 232-252 (IIVGSFIYQFTIYFAMSLGML), and 256-276 (LKLITAIVIIAFLATGNLNIS).

It belongs to the binding-protein-dependent transport system permease family. The complex is probably composed of two ATP-binding proteins (CDR20291_0806), two transmembrane proteins (CDR20291_0807) and a solute-binding protein (CDR20291_0805).

It is found in the cell membrane. In terms of biological role, probably part of an ABC transporter complex involved in tyrosine uptake. May also import phenylalanine. Probably responsible for the translocation of the substrate across the membrane. This chain is Tyrosine transport system permease protein, found in Clostridioides difficile (strain R20291) (Peptoclostridium difficile).